The primary structure comprises 407 residues: BRCA1-A complex subunit Abraxas 1 (407 aa).

The MPN domain occupies 7–155; it reads LGVLSGFVLG…THCLEHALYK (149 aa). At S48 the chain carries Phosphoserine. A coiled-coil region spans residues 209-259; it reads LKEVHKINEMYAAVQEELKSICQKVEQSEREVEKLLMDVNQLKEVRRTQQA. The interval 344 to 407 is disordered; it reads KRKALDTHDQ…DADYPRSPTF (64 aa). Basic and acidic residues predominate over residues 347–366; it reads ALDTHDQGSVKRPRLLETES. 4 positions are modified to phosphoserine: S384, S385, S394, and S404. Over residues 388-399 the composition is skewed to acidic residues; the sequence is IDIEMGSPEDDA. The pSXXF motif motif lies at 404–407; that stretch reads SPTF.

Belongs to the FAM175 family. Abraxas subfamily. In terms of assembly, component of the ARISC complex, at least composed of UIMC1/RAP80, ABRAXAS1, BRCC3/BRCC36, BABAM2 and BABAM1/NBA1. Component of the BRCA1-A complex, at least composed of the BRCA1, BARD1, UIMC1/RAP80, ABRAXAS1, BRCC3/BRCC36, BABAM2 and BABAM1/NBA1. In the complex, interacts directly with UIMC1/RAP80, BRCC3/BRCC36 and BABAM2. Homodimer. Interacts directly (when phosphorylated at Ser-404) with BRCA1. The phosphorylated homodimer can interact directly with two BRCA1 chains, giving rise to a heterotetramer. Binds polyubiquitin. Post-translationally, phosphorylation of Ser-404 of the pSXXF motif by ATM or ATR constitutes a specific recognition motif for the BRCT domain of BRCA1.

The protein localises to the nucleus. Involved in DNA damage response and double-strand break (DSB) repair. Component of the BRCA1-A complex, acting as a central scaffold protein that assembles the various components of the complex and mediates the recruitment of BRCA1. The BRCA1-A complex specifically recognizes 'Lys-63'-linked ubiquitinated histones H2A and H2AX at DNA lesion sites, leading to target the BRCA1-BARD1 heterodimer to sites of DNA damage at DSBs. This complex also possesses deubiquitinase activity that specifically removes 'Lys-63'-linked ubiquitin on histones H2A and H2AX. The sequence is that of BRCA1-A complex subunit Abraxas 1 from Mus musculus (Mouse).